A 122-amino-acid polypeptide reads, in one-letter code: ATP synthase epsilon chain (122 aa).

It belongs to the ATPase epsilon chain family. F-type ATPases have 2 components, CF(1) - the catalytic core - and CF(0) - the membrane proton channel. CF(1) has five subunits: alpha(3), beta(3), gamma(1), delta(1), epsilon(1). CF(0) has three main subunits: a, b and c.

Its subcellular location is the cell membrane. Its function is as follows. Produces ATP from ADP in the presence of a proton gradient across the membrane. The chain is ATP synthase epsilon chain from Rhodococcus erythropolis (strain PR4 / NBRC 100887).